The chain runs to 207 residues: Ribosomal RNA small subunit methyltransferase G (207 aa).

S-adenosyl-L-methionine-binding positions include Gly-73, Leu-78, 124–125, and Arg-139; that span reads VE.

The protein belongs to the methyltransferase superfamily. RNA methyltransferase RsmG family.

The protein localises to the cytoplasm. The enzyme catalyses guanosine(527) in 16S rRNA + S-adenosyl-L-methionine = N(7)-methylguanosine(527) in 16S rRNA + S-adenosyl-L-homocysteine. Its function is as follows. Specifically methylates the N7 position of guanine in position 527 of 16S rRNA. In Enterobacter sp. (strain 638), this protein is Ribosomal RNA small subunit methyltransferase G.